The sequence spans 292 residues: Bifunctional protein FolD (292 aa).

NADP(+) contacts are provided by residues 166 to 168, Ser191, and Ile232; that span reads GRS.

This sequence belongs to the tetrahydrofolate dehydrogenase/cyclohydrolase family. Homodimer.

The enzyme catalyses (6R)-5,10-methylene-5,6,7,8-tetrahydrofolate + NADP(+) = (6R)-5,10-methenyltetrahydrofolate + NADPH. The catalysed reaction is (6R)-5,10-methenyltetrahydrofolate + H2O = (6R)-10-formyltetrahydrofolate + H(+). It participates in one-carbon metabolism; tetrahydrofolate interconversion. Its function is as follows. Catalyzes the oxidation of 5,10-methylenetetrahydrofolate to 5,10-methenyltetrahydrofolate and then the hydrolysis of 5,10-methenyltetrahydrofolate to 10-formyltetrahydrofolate. In Wolbachia pipientis wMel, this protein is Bifunctional protein FolD.